The following is a 1201-amino-acid chain: uncharacterized protein (1201 aa).

Residues 140 to 160 (IIINLIFFFAFIIVGIYLFKP) traverse the membrane as a helical segment. 2 coiled-coil regions span residues 420–459 (QKKQ…AELN) and 536–574 (AIKA…ITKM).

It is found in the cell membrane. This is an uncharacterized protein from Bacillus subtilis (strain 168).